The following is a 428-amino-acid chain: A-kinase anchor protein 5 (428 aa).

An essential to the intracellular anchoring function region spans residues M1–D170. Disordered regions lie at residues M1–E207 and L237–S313. Positions V10–A32 are enriched in basic and acidic residues. A lipid anchor (S-palmitoyl cysteine) is attached at C36. Residues F37–K48 show a composition bias toward basic residues. Basic and acidic residues predominate over residues D57–A68. Residues G76 to K96 carry the AKAP CaM-binding motif. T87 is subject to Phosphothreonine; by PKC. At S92 the chain carries Phosphoserine; by PKA. At S94 the chain carries Phosphoserine; by PKC. C129 carries S-palmitoyl cysteine lipidation. Basic and acidic residues predominate over residues S133–E156. Residues V161–D170 are compositionally biased toward polar residues. Basic and acidic residues-rich tracts occupy residues Q171–D191 and P290–E311. The RII-beta subunit binding domain stretch occupies residues Y389–E410. Positions Q411–Q428 are tethers NFATC2 to CRAC channels.

In terms of assembly, binding protein for dimer of the RII-beta regulatory subunit of cAMP-dependent protein kinase (PKA) and also for the protein kinase C (PKC) and the phosphatase calcineurin (PP2B). Each enzyme is inhibited when bound to the anchoring protein. Also binds the beta2-adrenergic receptor. Part of a complex containing AKAP5, ADCY5, ADCY6 and PDE4C. Interacts with ADCY8, and enhances its phosphorylation at lipid rafts. Interacts with ORAI1 (isoform alpha) (via N-terminus) upon store depletion and in response to LTC4. Does not interact with ORAI2 and ORAI3 paralogs. Interacts (via leucine zipper domain) with NFATC2/NFAT1. Interacts with calmodulin; the interaction is calcium-independent. Interacts with KCNQ2; the interaction may help KCNQ2 channel complex to retain calcium-bound calmodulin. In terms of processing, palmitoylated. Palmitoylation at Cys-36 and Cys-129 play a key role in the targeting of AKAP5 to lipid rafts. Palmitoylation by ZDHHC2 is required for AKAP5 function in LTP-stimulated recycling endosome exocytosis. Predominantly in brain, and to a lesser extent in adrenal medulla, lung and anterior pituitary.

It localises to the postsynaptic recycling endosome membrane. Functionally, multivalent scaffold protein that anchors the cAMP-dependent protein kinase/PKA to cytoskeletal and/or organelle-associated proteins, targeting the signal carried by cAMP to specific intracellular effectors. Association with the beta2-adrenergic receptor (beta2-AR) not only regulates beta2-AR signaling pathway, but also the activation by PKA by switching off the beta2-AR signaling cascade. Plays a role in long term synaptic potentiation by regulating protein trafficking from the dendritic recycling endosomes to the plasma membrane and controlling both structural and functional plasticity at excitatory synapses. Associates with ORAI1 pore-forming subunit of CRAC channels in Ca(2+) signaling microdomains where it recruits NFATC2/NFAT1 and couples store-operated Ca(2+) influx to calmodulin and calcineurin signaling and activation of NFAT-dependent transcriptional responses. The polypeptide is A-kinase anchor protein 5 (AKAP5) (Bos taurus (Bovine)).